The sequence spans 441 residues: UDP-N-acetylglucosamine 1-carboxyvinyltransferase 1 (441 aa).

Residue 42 to 43 (KN) coordinates phosphoenolpyruvate. Position 117 (R117) interacts with UDP-N-acetyl-alpha-D-glucosamine. The active-site Proton donor is C141. C141 bears the 2-(S-cysteinyl)pyruvic acid O-phosphothioketal mark. D330 and I352 together coordinate UDP-N-acetyl-alpha-D-glucosamine.

It belongs to the EPSP synthase family. MurA subfamily.

The protein localises to the cytoplasm. The enzyme catalyses phosphoenolpyruvate + UDP-N-acetyl-alpha-D-glucosamine = UDP-N-acetyl-3-O-(1-carboxyvinyl)-alpha-D-glucosamine + phosphate. Its pathway is cell wall biogenesis; peptidoglycan biosynthesis. Its function is as follows. Cell wall formation. Adds enolpyruvyl to UDP-N-acetylglucosamine. The polypeptide is UDP-N-acetylglucosamine 1-carboxyvinyltransferase 1 (Symbiobacterium thermophilum (strain DSM 24528 / JCM 14929 / IAM 14863 / T)).